Here is a 291-residue protein sequence, read N- to C-terminus: Bifunctional protein FolD (291 aa).

Residues 168–170 (GRG), Thr-195, and Val-236 contribute to the NADP(+) site.

Belongs to the tetrahydrofolate dehydrogenase/cyclohydrolase family. Homodimer.

It catalyses the reaction (6R)-5,10-methylene-5,6,7,8-tetrahydrofolate + NADP(+) = (6R)-5,10-methenyltetrahydrofolate + NADPH. The enzyme catalyses (6R)-5,10-methenyltetrahydrofolate + H2O = (6R)-10-formyltetrahydrofolate + H(+). It functions in the pathway one-carbon metabolism; tetrahydrofolate interconversion. Its function is as follows. Catalyzes the oxidation of 5,10-methylenetetrahydrofolate to 5,10-methenyltetrahydrofolate and then the hydrolysis of 5,10-methenyltetrahydrofolate to 10-formyltetrahydrofolate. In Bifidobacterium longum (strain DJO10A), this protein is Bifunctional protein FolD.